The following is a 132-amino-acid chain: Small ribosomal subunit protein uS8 (132 aa).

The protein belongs to the universal ribosomal protein uS8 family. Part of the 30S ribosomal subunit. Contacts proteins S5 and S12.

Its function is as follows. One of the primary rRNA binding proteins, it binds directly to 16S rRNA central domain where it helps coordinate assembly of the platform of the 30S subunit. The protein is Small ribosomal subunit protein uS8 of Mycolicibacterium smegmatis (strain ATCC 700084 / mc(2)155) (Mycobacterium smegmatis).